Reading from the N-terminus, the 318-residue chain is Trans-prenyltransferase (318 aa).

The helical transmembrane segment at 1–21 threads the bilayer; it reads MLHLIYISIIVVLIIILISYT. Isopentenyl diphosphate-binding residues include Lys85, Arg88, and His122. Mg(2+) contacts are provided by Asp129 and Asp135. Position 140 (Arg140) interacts with dimethylallyl diphosphate. Arg141 contributes to the isopentenyl diphosphate binding site. Lys216, Thr217, and Gln254 together coordinate dimethylallyl diphosphate.

It belongs to the FPP/GGPP synthase family. Asfivirus trans-prenyltransferase subfamily. It depends on Mg(2+) as a cofactor.

It is found in the host endoplasmic reticulum. The protein localises to the host membrane. It carries out the reaction isopentenyl diphosphate + dimethylallyl diphosphate = (2E)-geranyl diphosphate + diphosphate. It catalyses the reaction isopentenyl diphosphate + (2E)-geranyl diphosphate = (2E,6E)-farnesyl diphosphate + diphosphate. The catalysed reaction is isopentenyl diphosphate + (2E,6E)-farnesyl diphosphate = (2E,6E,10E)-geranylgeranyl diphosphate + diphosphate. The enzyme catalyses isopentenyl diphosphate + (2E,6E,10E)-geranylgeranyl diphosphate = (2E,6E,10E,14E)-geranylfarnesyl diphosphate + diphosphate. It functions in the pathway isoprenoid biosynthesis; farnesyl diphosphate biosynthesis; farnesyl diphosphate from geranyl diphosphate and isopentenyl diphosphate: step 1/1. The protein operates within isoprenoid biosynthesis; geranyl diphosphate biosynthesis; geranyl diphosphate from dimethylallyl diphosphate and isopentenyl diphosphate: step 1/1. It participates in isoprenoid biosynthesis; geranylgeranyl diphosphate biosynthesis; geranylgeranyl diphosphate from farnesyl diphosphate and isopentenyl diphosphate: step 1/1. Its function is as follows. Trans-prenyltransferase that catalyzes the sequential condensation of isopentenyl diphosphate (IPP) with different allylic diphosphates, such as dimethylallyl diphosphate (DMAPP), geranyl diphosphate (GPP), farnesyl diphosphate (FPP) and geranylgeranyl diphosphate (GGPP), farnesyl diphosphate being the best allylic substrate. The chain is Trans-prenyltransferase from Ornithodoros (relapsing fever ticks).